Consider the following 362-residue polypeptide: 3-dehydroquinate synthase (362 aa).

NAD(+) contacts are provided by residues 72–77 (SGEEAK), 106–110 (GVTGD), 130–131 (TT), K142, and K151. Residues E184, H246, and H263 each coordinate Zn(2+).

The protein belongs to the sugar phosphate cyclases superfamily. Dehydroquinate synthase family. It depends on Co(2+) as a cofactor. Requires Zn(2+) as cofactor. NAD(+) serves as cofactor.

It is found in the cytoplasm. The catalysed reaction is 7-phospho-2-dehydro-3-deoxy-D-arabino-heptonate = 3-dehydroquinate + phosphate. Its pathway is metabolic intermediate biosynthesis; chorismate biosynthesis; chorismate from D-erythrose 4-phosphate and phosphoenolpyruvate: step 2/7. Catalyzes the conversion of 3-deoxy-D-arabino-heptulosonate 7-phosphate (DAHP) to dehydroquinate (DHQ). The sequence is that of 3-dehydroquinate synthase from Bacillus velezensis (strain DSM 23117 / BGSC 10A6 / LMG 26770 / FZB42) (Bacillus amyloliquefaciens subsp. plantarum).